Reading from the N-terminus, the 295-residue chain is Bifunctional protein FolD (295 aa).

NADP(+) is bound by residues 169–171 (GRS), S194, and I235.

The protein belongs to the tetrahydrofolate dehydrogenase/cyclohydrolase family. As to quaternary structure, homodimer.

It catalyses the reaction (6R)-5,10-methylene-5,6,7,8-tetrahydrofolate + NADP(+) = (6R)-5,10-methenyltetrahydrofolate + NADPH. It carries out the reaction (6R)-5,10-methenyltetrahydrofolate + H2O = (6R)-10-formyltetrahydrofolate + H(+). It functions in the pathway one-carbon metabolism; tetrahydrofolate interconversion. Catalyzes the oxidation of 5,10-methylenetetrahydrofolate to 5,10-methenyltetrahydrofolate and then the hydrolysis of 5,10-methenyltetrahydrofolate to 10-formyltetrahydrofolate. The protein is Bifunctional protein FolD of Acaryochloris marina (strain MBIC 11017).